Reading from the N-terminus, the 257-residue chain is Type III pantothenate kinase (257 aa).

An ATP-binding site is contributed by 6 to 13 (DVGNTNTV). Residues Y100 and 107 to 110 (GADR) contribute to the substrate site. Residue D109 is the Proton acceptor of the active site. D129 is a K(+) binding site. T132 contributes to the ATP binding site. Residue T185 participates in substrate binding.

It belongs to the type III pantothenate kinase family. Homodimer. Requires NH4(+) as cofactor. It depends on K(+) as a cofactor.

The protein localises to the cytoplasm. It carries out the reaction (R)-pantothenate + ATP = (R)-4'-phosphopantothenate + ADP + H(+). The protein operates within cofactor biosynthesis; coenzyme A biosynthesis; CoA from (R)-pantothenate: step 1/5. Its function is as follows. Catalyzes the phosphorylation of pantothenate (Pan), the first step in CoA biosynthesis. This Desulfatibacillum aliphaticivorans protein is Type III pantothenate kinase.